Reading from the N-terminus, the 279-residue chain is Undecaprenyl-diphosphatase (279 aa).

A run of 8 helical transmembrane segments spans residues 17–37, 46–66, 92–112, 123–143, 156–176, 197–217, 226–246, and 257–277; these read TEFL…FFPF, AFED…VVVL, FQFY…GFLL, SDLL…MVFV, IGFK…IPGV, AEFS…YKLY, ETIG…YFII, and SFIS…LYFV.

It belongs to the UppP family.

The protein resides in the cell inner membrane. The enzyme catalyses di-trans,octa-cis-undecaprenyl diphosphate + H2O = di-trans,octa-cis-undecaprenyl phosphate + phosphate + H(+). Functionally, catalyzes the dephosphorylation of undecaprenyl diphosphate (UPP). Confers resistance to bacitracin. The sequence is that of Undecaprenyl-diphosphatase from Leptospira biflexa serovar Patoc (strain Patoc 1 / ATCC 23582 / Paris).